A 266-amino-acid chain; its full sequence is Undecaprenyl-diphosphatase (266 aa).

A run of 8 helical transmembrane segments spans residues 1–21 (MMSW…TEFL), 43–63 (ASVF…VIYW), 81–101 (LYGI…GFLF), 107–127 (TLFT…FMLI), 145–165 (LTPK…WPGF), 183–203 (HLAA…ATGY), 219–239 (LFIT…KVFI), and 245–265 (ISLR…YLCI).

The protein belongs to the UppP family.

The protein localises to the cell membrane. It catalyses the reaction di-trans,octa-cis-undecaprenyl diphosphate + H2O = di-trans,octa-cis-undecaprenyl phosphate + phosphate + H(+). Functionally, catalyzes the dephosphorylation of undecaprenyl diphosphate (UPP). Confers resistance to bacitracin. This is Undecaprenyl-diphosphatase from Lawsonia intracellularis (strain PHE/MN1-00).